The following is a 166-amino-acid chain: CDP-archaeol synthase (166 aa).

A run of 5 helical transmembrane segments spans residues 7 to 27 (LLLS…GPFI), 55 to 75 (LIVA…FFTA), 78 to 98 (TLIS…GAFI), 116 to 136 (LDFV…ITWY), and 138 to 158 (FLFI…VAYL).

It belongs to the CDP-archaeol synthase family. Mg(2+) is required as a cofactor.

It localises to the cell membrane. The enzyme catalyses 2,3-bis-O-(geranylgeranyl)-sn-glycerol 1-phosphate + CTP + H(+) = CDP-2,3-bis-O-(geranylgeranyl)-sn-glycerol + diphosphate. It participates in membrane lipid metabolism; glycerophospholipid metabolism. In terms of biological role, catalyzes the formation of CDP-2,3-bis-(O-geranylgeranyl)-sn-glycerol (CDP-archaeol) from 2,3-bis-(O-geranylgeranyl)-sn-glycerol 1-phosphate (DGGGP) and CTP. This reaction is the third ether-bond-formation step in the biosynthesis of archaeal membrane lipids. The sequence is that of CDP-archaeol synthase from Saccharolobus islandicus (strain Y.N.15.51 / Yellowstone #2) (Sulfolobus islandicus).